Reading from the N-terminus, the 312-residue chain is Aspartate carbamoyltransferase catalytic subunit (312 aa).

Carbamoyl phosphate is bound by residues arginine 55 and threonine 56. Residue lysine 83 coordinates L-aspartate. 3 residues coordinate carbamoyl phosphate: arginine 105, histidine 138, and glutamine 141. L-aspartate contacts are provided by arginine 171 and arginine 225. Carbamoyl phosphate-binding residues include glycine 266 and proline 267.

Belongs to the aspartate/ornithine carbamoyltransferase superfamily. ATCase family. In terms of assembly, heterododecamer (2C3:3R2) of six catalytic PyrB chains organized as two trimers (C3), and six regulatory PyrI chains organized as three dimers (R2).

The catalysed reaction is carbamoyl phosphate + L-aspartate = N-carbamoyl-L-aspartate + phosphate + H(+). The protein operates within pyrimidine metabolism; UMP biosynthesis via de novo pathway; (S)-dihydroorotate from bicarbonate: step 2/3. Catalyzes the condensation of carbamoyl phosphate and aspartate to form carbamoyl aspartate and inorganic phosphate, the committed step in the de novo pyrimidine nucleotide biosynthesis pathway. This is Aspartate carbamoyltransferase catalytic subunit from Corynebacterium efficiens (strain DSM 44549 / YS-314 / AJ 12310 / JCM 11189 / NBRC 100395).